Here is a 95-residue protein sequence, read N- to C-terminus: Aspartyl/glutamyl-tRNA(Asn/Gln) amidotransferase subunit C (95 aa).

Belongs to the GatC family. Heterotrimer of A, B and C subunits.

It carries out the reaction L-glutamyl-tRNA(Gln) + L-glutamine + ATP + H2O = L-glutaminyl-tRNA(Gln) + L-glutamate + ADP + phosphate + H(+). The enzyme catalyses L-aspartyl-tRNA(Asn) + L-glutamine + ATP + H2O = L-asparaginyl-tRNA(Asn) + L-glutamate + ADP + phosphate + 2 H(+). In terms of biological role, allows the formation of correctly charged Asn-tRNA(Asn) or Gln-tRNA(Gln) through the transamidation of misacylated Asp-tRNA(Asn) or Glu-tRNA(Gln) in organisms which lack either or both of asparaginyl-tRNA or glutaminyl-tRNA synthetases. The reaction takes place in the presence of glutamine and ATP through an activated phospho-Asp-tRNA(Asn) or phospho-Glu-tRNA(Gln). The sequence is that of Aspartyl/glutamyl-tRNA(Asn/Gln) amidotransferase subunit C from Rhodopseudomonas palustris (strain BisA53).